The following is a 108-amino-acid chain: FK506-binding protein 1A (108 aa).

Positions 1 to 20 are disordered; the sequence is MGVEVQRISPGDGKNFPKPG. Residues 20-108 enclose the PPIase FKBP-type domain; the sequence is GDTVSIHYTG…TFEVELLKIN (89 aa).

The protein belongs to the FKBP-type PPIase family. FKBP1 subfamily.

The protein localises to the cytoplasm. The catalysed reaction is [protein]-peptidylproline (omega=180) = [protein]-peptidylproline (omega=0). With respect to regulation, inhibited by both FK506 and rapamycin. Functionally, PPIases accelerate the folding of proteins. It catalyzes the cis-trans isomerization of proline imidic peptide bonds in oligopeptides. This Emericella nidulans (strain FGSC A4 / ATCC 38163 / CBS 112.46 / NRRL 194 / M139) (Aspergillus nidulans) protein is FK506-binding protein 1A (fprA).